The following is a 152-amino-acid chain: Snaclec lebecin subunit alpha (152 aa).

The signal sequence occupies residues 1 to 23 (MGRSISVSFGLLVVFLSLSGTGA). 3 disulfide bridges follow: C27–C38, C54–C147, and C122–C139. A C-type lectin domain is found at 34-148 (YEGGCYYVFD…CELAYHFICS (115 aa)).

As to quaternary structure, heterodimer with the beta subunit (AC W5XCJ6); disulfide-linked. Expressed by the venom gland.

Its subcellular location is the secreted. Inhibits human breast cancer cells (MDA-MB231) migration and proliferation, as well as their adhesion to fibrinogen and fibronectin. This inhibition may be due to the binding to receptors of the integrin family, probably alpha-v/beta-3 (ITGAV/ITGB3) (40% inhibition of cell adhesion) and alpha-5/beta-1 (ITGA5/ITGB1) (by comparison with lebectin). This chain is Snaclec lebecin subunit alpha, found in Macrovipera lebetinus (Levantine viper).